The chain runs to 557 residues: MSVIGLWLVTVTATLSLFVWQLIFLLSIPKSIVVCLIAESLFFVAWFFYWTVIYPRYLTPFRHLPTPASRSILTGNQNGLFTENSWDVARRVSQTVPNSGLIRYYVALSNERILVTNTRALSDVLTNHSHDFGKSNLAKFALKRLTGNGLGFLEGNEHKVHRKNLMPAFTRKHVKELTPIFWDKAMEMVKGMEAEVRCGKDTSTQGTGIVEIHDWATRATLDIIGTAGFGYDFGTLHNPSNEIGQQYKKMFLEPSTAFNWLELLGNYIDFRFLMTLPVKKNRDLTAGSNFMREIAKKVIRERRHELFQRMTSQAGNMKNTKKDIITTALASDCFTDDQLVDHVMAFLVAGHESTATAFEWAMYELGHRPEMQKRVRDEVRTYLPSPSAGGVKNITFESVPYLQAICNEVLRLYPFLPFATRVAEKDTWVADQFVPKGTIVAYAAHISNRDSELWSGPALDAFDPERWMEPGKESSGGANSNYAMLTFSAGPKSCIGEAWTRAELPCLVGAMVGSFEIELVEGKQADGTVYPTVDFKMGKVLKSRDGVFVRLRRLEDW.

Transmembrane regions (helical) follow at residues 6–26 (LWLV…IFLL) and 32–52 (IVVC…YWTV). Asn-127 and Asn-393 each carry an N-linked (GlcNAc...) asparagine glycan. Cys-494 lines the heme pocket.

It belongs to the cytochrome P450 family. Heme is required as a cofactor.

Its subcellular location is the membrane. It participates in secondary metabolite biosynthesis. In terms of biological role, cytochrome P450 monooxygenase; part of the gene cluster that mediates the biosynthesis of fusarielins F, G and H, decaketide compounds with 5 methylations and a decaline core that act as mycoestrogens as they stimulate growth of MCF-7 breast cancer cells. The initial compound in the pathway is produced by the reducing polyketide synthase FSL1. FSL1 lacks an active enoyl reductase (ER) domain and biosynthesis of fusarielins relies on the trans-acting enoyl reductase FSL5, before it is released through hydrolysis catalyzed by the thioesterase FSL2. Fusarielins F, G, and H have a C11=C12 cis double bond and is fully reduced between C10 and C11 and between C12 and C13. FSL3 can be involved in the formation of the C11=C12 cis double bond by moving a hypothetical C10=C11 or C12=C13 trans double bond to form prefusarielin. Prefusarielin is oxygenated at C15 and C16 by FSL4, resulting in fusarielin F, which subsequently is epoxidized into fusarielin G by the same enzyme. The final step in the pathway is a reduction of the carboxylic acid moiety to yield fusarielin H via a still undetermined mechanism. This Gibberella zeae (strain ATCC MYA-4620 / CBS 123657 / FGSC 9075 / NRRL 31084 / PH-1) (Wheat head blight fungus) protein is Cytochrome P450 monooxygenase FSL4.